We begin with the raw amino-acid sequence, 433 residues long: tRNA(Ile2) 2-agmatinylcytidine synthetase TiaS (433 aa).

The protein belongs to the TiaS family.

The protein localises to the cytoplasm. The catalysed reaction is cytidine(34) in tRNA(Ile2) + agmatine + ATP + H2O = 2-agmatinylcytidine(34) in tRNA(Ile2) + AMP + 2 phosphate + 2 H(+). In terms of biological role, ATP-dependent agmatine transferase that catalyzes the formation of 2-agmatinylcytidine (agm2C) at the wobble position (C34) of tRNA(Ile2), converting the codon specificity from AUG to AUA. In Methanopyrus kandleri (strain AV19 / DSM 6324 / JCM 9639 / NBRC 100938), this protein is tRNA(Ile2) 2-agmatinylcytidine synthetase TiaS.